Here is a 387-residue protein sequence, read N- to C-terminus: Odorant receptor 19a (387 aa).

At 1-40 (MDISKVDSTRALVNHWRIFRIMGIHPPGKRTFWGRHYTAY) the chain is on the cytoplasmic side. The helical transmembrane segment at 41-61 (SMVWNVTFHICIWVSFSVNLL) threads the bilayer. Residues 62–71 (QSNSLETFCE) are Extracellular-facing. A helical membrane pass occupies residues 72 to 92 (SLCVTMPHTLYMLKLINVRRM). The Cytoplasmic portion of the chain corresponds to 93-127 (RGQMISSHWLLRLLDKRLGCDDERQIIMAGIERAE). A helical transmembrane segment spans residues 128 to 148 (FIFRTIFRGLACTVVLGIIYI). Over 149-171 (SASSEPTLMYPTWIPWNWRDSTS) the chain is Extracellular. The helical transmembrane segment at 172–192 (AYLATAMLHTTALMANATLVL) threads the bilayer. At 193 to 254 (NLSSYPGTYL…LRLFKSLERS (62 aa)) the chain is on the cytoplasmic side. A helical transmembrane segment spans residues 255 to 275 (LSMTCFLQFFSTACAQCTICY). Residues 276 to 285 (FLLFGNVGIM) are Extracellular-facing. The helical transmembrane segment at 286–306 (RFMNMLFLLVILTTETLLLCY) threads the bilayer. Residues 307–336 (TAELPCKEGESLLTAVYSCNWLSQSVNFRR) are Cytoplasmic-facing. A helical transmembrane segment spans residues 337–357 (LLLLMLARCQIPMILVSGVIV). Residues 358-387 (PISMKTFTVMIKGAYTMLTLLNEIRKTSLE) are Extracellular-facing.

Belongs to the insect chemoreceptor superfamily. Heteromeric odorant receptor channel (TC 1.A.69) family. Or2a subfamily. Interacts with Orco. Complexes exist early in the endomembrane system in olfactory sensory neurons (OSNs), coupling these complexes to the conserved ciliary trafficking pathway. Expressed in ai2A olfactory sensory neurons in the antenna.

Its subcellular location is the cell membrane. Functionally, odorant receptor which mediates acceptance or avoidance behavior, depending on its substrates. The odorant receptor repertoire encodes a large collection of odor stimuli that vary widely in identity, intensity, and duration. May form a complex with Orco to form odorant-sensing units, providing sensitive and prolonged odorant signaling and calcium permeability. Involved in the preference for citrus fruits for oviposition, especially through the response to valencene, the primary ligand of Or19a. Larvae growing on citrus fruits suffer a reduced risk of parasitism since endoparasitoid wasps that parasitize larvae are strongly repelled by the smell of citrus, as well as by valencene. The polypeptide is Odorant receptor 19a (Or19a) (Drosophila melanogaster (Fruit fly)).